The primary structure comprises 174 residues: Magnetosome protein MamT (174 aa).

Topologically, residues 1-9 (MGTPGGGRR) are cytoplasmic. A helical membrane pass occupies residues 10 to 28 (WMTLISITLLMVVGLGLYW). Over 29-174 (DELSLSAGIS…EKKSGIKWLL (146 aa)) the chain is Lumenal. The MCR (magnetochrome) 1 signature appears at 87–107 (VMPGTGMPHPYVGDCIQCHLM). The heme site is built by Cys101, Cys104, His105, Cys152, Cys155, and His156. The MCR 2 signature appears at 138 to 158 (ILPTTRQPHPPAGRCIKCHDI).

Belongs to the magnetosome MamT family. It depends on heme as a cofactor.

It is found in the magnetosome membrane. May play a role in magnetite crystal maturation. May transfer electrons to balance the Fe(2+)-Fe(3+) ratio during magnetite formation. In Magnetospirillum gryphiswaldense (strain DSM 6361 / JCM 21280 / NBRC 15271 / MSR-1), this protein is Magnetosome protein MamT.